The following is a 93-amino-acid chain: Large ribosomal subunit protein uL23 (93 aa).

Belongs to the universal ribosomal protein uL23 family. Part of the 50S ribosomal subunit. Contacts protein L29, and trigger factor when it is bound to the ribosome.

In terms of biological role, one of the early assembly proteins it binds 23S rRNA. One of the proteins that surrounds the polypeptide exit tunnel on the outside of the ribosome. Forms the main docking site for trigger factor binding to the ribosome. In Sulfurovum sp. (strain NBC37-1), this protein is Large ribosomal subunit protein uL23.